The primary structure comprises 646 residues: Depudecin biosynthesis cluster-specific transcription activator DEP6 (646 aa).

The zn(2)-C6 fungal-type DNA-binding region spans 16–43 (CEICRERKVRCDRALPKCRRCDRLNQPC). Disordered regions lie at residues 76-130 (TTAA…SQSQ) and 345-366 (KSEH…LALP). Residues 349-360 (SQGMQNRETQSG) show a composition bias toward polar residues.

The protein resides in the nucleus. In terms of biological role, transcription factor that positively regulates the expression of the gene cluster that mediates the biosynthesis of depudecin, a highly oxidized eleven-carbon linear polyketide that acts as a histone deacetylase (HDAC) inhibitor and makes a small contribution to pathogenesis. The polypeptide is Depudecin biosynthesis cluster-specific transcription activator DEP6 (Alternaria brassicicola (Dark leaf spot agent)).